The following is a 345-amino-acid chain: Uroporphyrinogen decarboxylase (345 aa).

Substrate is bound by residues 28-32 (RQAGR), D77, Y153, S208, and H322.

It belongs to the uroporphyrinogen decarboxylase family. Homodimer.

Its subcellular location is the cytoplasm. The catalysed reaction is uroporphyrinogen III + 4 H(+) = coproporphyrinogen III + 4 CO2. The protein operates within porphyrin-containing compound metabolism; protoporphyrin-IX biosynthesis; coproporphyrinogen-III from 5-aminolevulinate: step 4/4. Catalyzes the decarboxylation of four acetate groups of uroporphyrinogen-III to yield coproporphyrinogen-III. In Solibacter usitatus (strain Ellin6076), this protein is Uroporphyrinogen decarboxylase.